We begin with the raw amino-acid sequence, 419 residues long: O-methyltransferase gsfB (419 aa).

S-adenosyl-L-methionine is bound by residues 255–256 (GG), aspartate 278, 300–301 (DF), and arginine 316. Histidine 320 (proton acceptor) is an active-site residue.

This sequence belongs to the class I-like SAM-binding methyltransferase superfamily. Cation-independent O-methyltransferase family.

It catalyses the reaction 2-(2,4-dihydroxy-6-oxidobenzoyl)-5-hydroxy-3-methylbenzenolate + S-adenosyl-L-methionine = griseophenone D + S-adenosyl-L-homocysteine + H(+). Its pathway is secondary metabolite biosynthesis; terpenoid biosynthesis. Its function is as follows. O-methyltransferase; part of the gene cluster that mediates the biosynthesis of griseofulvin, an important antifungal drug that has been in use for a long time for treating dermatophyte infections. The first step of the pathway is the formation of the heptaketide backbone by gsfA which is initiated by priming with acetyl-CoA, followed by sequential condensations of 6 malonyl-CoA units. The resulting benzophenone can undergo a spontaneous dehydration to form norlichexanthone. However, the true precursor for the griseofulvin biosynthesis is not norlichexanthone, but the heptaketide benzophenone that is O-methylated at 3-OH by gsfB to produce griseophenone D which is further methylated at 9-OH by gsfC to yield griseophenone C. Griseophenone C is then substrate of halogenase gsfI which is responsible for the regio-specific chlorination at the C13 position to form griseophenone B. The cytochrome P450 gsfF catalyzes the coupling of orcinol and phloroglucinol rings in griseophenone B to form desmethyl-dehydrogriseofulvin A which is further methylated at 5-OH by gsfD to yield dehydrogriseofulvin. Finally, gsfE performs stereospecific reduction of enone 18 of dehydrogriseofulvin to afford the final product griseofulvin. The sequence is that of O-methyltransferase gsfB from Penicillium aethiopicum.